A 61-amino-acid chain; its full sequence is Large ribosomal subunit protein uL30 (61 aa).

This sequence belongs to the universal ribosomal protein uL30 family. As to quaternary structure, part of the 50S ribosomal subunit.

This chain is Large ribosomal subunit protein uL30, found in Bordetella petrii (strain ATCC BAA-461 / DSM 12804 / CCUG 43448).